The following is a 110-amino-acid chain: Phosphoribosyl-AMP cyclohydrolase (110 aa).

Mg(2+) is bound at residue aspartate 74. Cysteine 75 serves as a coordination point for Zn(2+). Residues aspartate 76 and aspartate 78 each coordinate Mg(2+). Positions 91 and 98 each coordinate Zn(2+).

This sequence belongs to the PRA-CH family. Homodimer. It depends on Mg(2+) as a cofactor. Requires Zn(2+) as cofactor.

The protein localises to the cytoplasm. It catalyses the reaction 1-(5-phospho-beta-D-ribosyl)-5'-AMP + H2O = 1-(5-phospho-beta-D-ribosyl)-5-[(5-phospho-beta-D-ribosylamino)methylideneamino]imidazole-4-carboxamide. It participates in amino-acid biosynthesis; L-histidine biosynthesis; L-histidine from 5-phospho-alpha-D-ribose 1-diphosphate: step 3/9. In terms of biological role, catalyzes the hydrolysis of the adenine ring of phosphoribosyl-AMP. This chain is Phosphoribosyl-AMP cyclohydrolase, found in Lacticaseibacillus paracasei (strain ATCC 334 / BCRC 17002 / CCUG 31169 / CIP 107868 / KCTC 3260 / NRRL B-441) (Lactobacillus paracasei).